A 194-amino-acid polypeptide reads, in one-letter code: Fe/S biogenesis protein NfuA (194 aa).

The [4Fe-4S] cluster site is built by Cys152 and Cys155.

The protein belongs to the NfuA family. Homodimer. Requires [4Fe-4S] cluster as cofactor.

Functionally, involved in iron-sulfur cluster biogenesis. Binds a 4Fe-4S cluster, can transfer this cluster to apoproteins, and thereby intervenes in the maturation of Fe/S proteins. Could also act as a scaffold/chaperone for damaged Fe/S proteins. The polypeptide is Fe/S biogenesis protein NfuA (Pseudomonas fluorescens (strain Pf0-1)).